Here is a 190-residue protein sequence, read N- to C-terminus: RNA pyrophosphohydrolase (190 aa).

The 144-residue stretch at 6–149 folds into the Nudix hydrolase domain; sequence GYRPNVGIVL…KRGVYARALC (144 aa). The short motif at 38–59 is the Nudix box element; that stretch reads GGMHSDETPVEAMYRELNEEIG.

The protein belongs to the Nudix hydrolase family. RppH subfamily. Requires a divalent metal cation as cofactor.

Its function is as follows. Accelerates the degradation of transcripts by removing pyrophosphate from the 5'-end of triphosphorylated RNA, leading to a more labile monophosphorylated state that can stimulate subsequent ribonuclease cleavage. This chain is RNA pyrophosphohydrolase, found in Xylella fastidiosa (strain M12).